Reading from the N-terminus, the 307-residue chain is Coproporphyrin III ferrochelatase (307 aa).

Fe-coproporphyrin III-binding positions include Tyr12, Arg29, 45-46 (RY), Ser53, and Tyr124. Residues His181 and Glu263 each coordinate Fe(2+).

The protein belongs to the ferrochelatase family.

It is found in the cytoplasm. It catalyses the reaction Fe-coproporphyrin III + 2 H(+) = coproporphyrin III + Fe(2+). Its pathway is porphyrin-containing compound metabolism; protoheme biosynthesis. Functionally, involved in coproporphyrin-dependent heme b biosynthesis. Catalyzes the insertion of ferrous iron into coproporphyrin III to form Fe-coproporphyrin III. The chain is Coproporphyrin III ferrochelatase from Staphylococcus epidermidis (strain ATCC 35984 / DSM 28319 / BCRC 17069 / CCUG 31568 / BM 3577 / RP62A).